Here is a 158-residue protein sequence, read N- to C-terminus: uncharacterized protein (158 aa).

Transmembrane regions (helical) follow at residues 66-86 and 94-114; these read LLIIVAVLFPPLYISGLPWIM and FFSLSITSFIMVPFLLISLTI.

It localises to the membrane. This is an uncharacterized protein from Saccharomyces cerevisiae (strain ATCC 204508 / S288c) (Baker's yeast).